Reading from the N-terminus, the 76-residue chain is Small proline-rich protein 2I (76 aa).

3 repeat units span residues 21–29, 30–38, and 39–47. The interval 21–47 is 3 X 9 AA approximate tandem repeats; it reads KKCPEPCPPPQCPEPCPPPKCPEPCPE. The segment covering 40–53 has biased composition (pro residues); that stretch reads KCPEPCPESCPPPS. The disordered stretch occupies residues 40-76; the sequence is KCPEPCPESCPPPSYQQKCPPVQPPPPCQQKCPPKSK.

The protein belongs to the cornifin (SPRR) family. In terms of tissue distribution, not expressed in uterus.

It localises to the cytoplasm. Cross-linked envelope protein of keratinocytes. It is a keratinocyte protein that first appears in the cell cytosol, but ultimately becomes cross-linked to membrane proteins by transglutaminase. All that results in the formation of an insoluble envelope beneath the plasma membrane. In Mus musculus (Mouse), this protein is Small proline-rich protein 2I (Sprr2i).